A 475-amino-acid polypeptide reads, in one-letter code: Methylenomycin A resistance protein (475 aa).

14 helical membrane passes run 28–48 (ITALATGFVMATLDVTVVNVA), 65–85 (WIVDGYVLTFASLLMLAGGLA), 93–113 (VYLWGMGVFFLASLACALAPT), 123–143 (VQGAGAALFMPSSLSLLVFSF), 152–172 (MLGLWSAIVATSSGLGPTVGG), 173–193 (LMVSAFGWESIFLLNLPIGAI), 212–232 (LAVPGHLLWIVALAAVSFALI), 240–260 (TAGPVLTAYAVAVTAAALLAL), 285–305 (LVGFLFNFALFGSTFMLGLYF), 314–334 (FQAGLELLPMTIFFPVANIVY), 346–366 (LLTAFLLLAGAASLSMVTITA), 371–391 (WVVAVAVGVANIGAGIISPGM), 416–436 (QIGSLVGIAAMGVVLHSTSDW), and 439–459 (GAAISFLAVGLAYLLGGLSAW).

This sequence belongs to the major facilitator superfamily.

Its subcellular location is the cell membrane. Its function is as follows. Resistance to the epoxide antibiotic methylenomycin A; probably by mediating its efflux. The chain is Methylenomycin A resistance protein (mmr) from Streptomyces coelicolor (strain ATCC BAA-471 / A3(2) / M145).